The primary structure comprises 262 residues: Cell division protein FtsQ (262 aa).

At 1–20 (MSWSDKRRHWRARKSQVNWY) the chain is on the cytoplasmic side. A helical transmembrane segment spans residues 21 to 41 (LWSGIGFLSLVIGSFVFGGYL). Topologically, residues 42–262 (LHKFLNDAST…EPIINDEKPR (221 aa)) are periplasmic. Residues 52–121 (LPIEAVAIKG…AKLRVYLQEQ (70 aa)) enclose the POTRA domain.

Belongs to the FtsQ/DivIB family. FtsQ subfamily. Part of a complex composed of FtsB, FtsL and FtsQ.

The protein resides in the cell inner membrane. Essential cell division protein. May link together the upstream cell division proteins, which are predominantly cytoplasmic, with the downstream cell division proteins, which are predominantly periplasmic. May control correct divisome assembly. The sequence is that of Cell division protein FtsQ from Shewanella oneidensis (strain ATCC 700550 / JCM 31522 / CIP 106686 / LMG 19005 / NCIMB 14063 / MR-1).